The chain runs to 185 residues: Hypoxanthine/guanine phosphoribosyltransferase (185 aa).

This sequence belongs to the purine/pyrimidine phosphoribosyltransferase family. Archaeal HPRT subfamily. Homodimer.

The protein resides in the cytoplasm. It carries out the reaction IMP + diphosphate = hypoxanthine + 5-phospho-alpha-D-ribose 1-diphosphate. The catalysed reaction is GMP + diphosphate = guanine + 5-phospho-alpha-D-ribose 1-diphosphate. It functions in the pathway purine metabolism; IMP biosynthesis via salvage pathway; IMP from hypoxanthine: step 1/1. In terms of biological role, catalyzes a salvage reaction resulting in the formation of IMP that is energically less costly than de novo synthesis. The chain is Hypoxanthine/guanine phosphoribosyltransferase from Methanococcus maripaludis (strain C7 / ATCC BAA-1331).